Consider the following 206-residue polypeptide: Large ribosomal subunit protein uL4 (206 aa).

Residues 43-78 (ARSGNRAQKDREQVKHTTKKPWRQKGTGRARAGMSS) are disordered. A compositionally biased stretch (basic residues) spans 58-70 (HTTKKPWRQKGTG).

The protein belongs to the universal ribosomal protein uL4 family. In terms of assembly, part of the 50S ribosomal subunit.

In terms of biological role, one of the primary rRNA binding proteins, this protein initially binds near the 5'-end of the 23S rRNA. It is important during the early stages of 50S assembly. It makes multiple contacts with different domains of the 23S rRNA in the assembled 50S subunit and ribosome. Functionally, forms part of the polypeptide exit tunnel. This is Large ribosomal subunit protein uL4 from Polynucleobacter necessarius subsp. necessarius (strain STIR1).